Reading from the N-terminus, the 214-residue chain is MKPPALTPRLLLRAYALGIFPMAESRDDPEIHWIDPRHRGIFPLDGFHISRSLARRIRRMDWRVSVDEDFAATVEACADREETWINPTIFRLYVELHALGHAHSLEVREGETLVGGVYGVTLGRAFFGESMFSHRTDASKVALAFLIDRLRAGGFTLFDTQFLTPHLASLGAIEIRRSDYHQRLTEALEGNASFTPEGYWADPASVVQRNSQTS.

Belongs to the L/F-transferase family.

It localises to the cytoplasm. The enzyme catalyses N-terminal L-lysyl-[protein] + L-leucyl-tRNA(Leu) = N-terminal L-leucyl-L-lysyl-[protein] + tRNA(Leu) + H(+). The catalysed reaction is N-terminal L-arginyl-[protein] + L-leucyl-tRNA(Leu) = N-terminal L-leucyl-L-arginyl-[protein] + tRNA(Leu) + H(+). It carries out the reaction L-phenylalanyl-tRNA(Phe) + an N-terminal L-alpha-aminoacyl-[protein] = an N-terminal L-phenylalanyl-L-alpha-aminoacyl-[protein] + tRNA(Phe). Functionally, functions in the N-end rule pathway of protein degradation where it conjugates Leu, Phe and, less efficiently, Met from aminoacyl-tRNAs to the N-termini of proteins containing an N-terminal arginine or lysine. The protein is Leucyl/phenylalanyl-tRNA--protein transferase of Cereibacter sphaeroides (strain ATCC 17023 / DSM 158 / JCM 6121 / CCUG 31486 / LMG 2827 / NBRC 12203 / NCIMB 8253 / ATH 2.4.1.) (Rhodobacter sphaeroides).